Reading from the N-terminus, the 223-residue chain is Holliday junction branch migration complex subunit RuvA (223 aa).

Residues 1–67 are domain I; the sequence is MIGWLKGEKI…EDGSNLFGFI (67 aa). The interval 68–146 is domain II; sequence EKSERDLFRK…DFDLNNEFSP (79 aa). A flexible linker region spans residues 147–157; the sequence is PTKLRPESAED. Positions 158–223 are domain III; that stretch reads LNEELLTEIK…FKQALITLNK (66 aa).

It belongs to the RuvA family. As to quaternary structure, homotetramer. Forms an RuvA(8)-RuvB(12)-Holliday junction (HJ) complex. HJ DNA is sandwiched between 2 RuvA tetramers; dsDNA enters through RuvA and exits via RuvB. An RuvB hexamer assembles on each DNA strand where it exits the tetramer. Each RuvB hexamer is contacted by two RuvA subunits (via domain III) on 2 adjacent RuvB subunits; this complex drives branch migration. In the full resolvosome a probable DNA-RuvA(4)-RuvB(12)-RuvC(2) complex forms which resolves the HJ.

It localises to the cytoplasm. Functionally, the RuvA-RuvB-RuvC complex processes Holliday junction (HJ) DNA during genetic recombination and DNA repair, while the RuvA-RuvB complex plays an important role in the rescue of blocked DNA replication forks via replication fork reversal (RFR). RuvA specifically binds to HJ cruciform DNA, conferring on it an open structure. The RuvB hexamer acts as an ATP-dependent pump, pulling dsDNA into and through the RuvAB complex. HJ branch migration allows RuvC to scan DNA until it finds its consensus sequence, where it cleaves and resolves the cruciform DNA. The protein is Holliday junction branch migration complex subunit RuvA of Prochlorococcus marinus (strain MIT 9211).